The chain runs to 311 residues: MQVFLKATHFDFIGRRKPAIYASLFLIGVSLVSLFTQGLNFGIDFAGGTLIQVRFEKPMDLAPVRQAIAPLDLGDTVVQSFGTPEEVLIRVEKQGADNAAQQAIVSGVLDALKPIAGEHGVEMRRVEYVGPQVGEELTEKGMLAMLYAMVAILIYISFRFELRFALGAVLALVHDVVLTMGFFSVLQKEFTLVVVAALLTVVGYSLNDTIVVYDRIREEMKRMKRQPLATIINEAVNRTLSRTLITSLTTVLVLIALFVLGGAVIHDFALTLLFGVGIGTYSSIFVASPLVLLMDPGSRRKVAAETAEETP.

Helical transmembrane passes span 19 to 39 (AIYASLFLIGVSLVSLFTQGL), 142 to 162 (MLAMLYAMVAILIYISFRFEL), 166 to 186 (LGAVLALVHDVVLTMGFFSVL), 192 to 212 (LVVVAALLTVVGYSLNDTIVV), 245 to 265 (ITSLTTVLVLIALFVLGGAVI), and 272 to 292 (LLFGVGIGTYSSIFVASPLVL).

It belongs to the SecD/SecF family. SecF subfamily. In terms of assembly, forms a complex with SecD. Part of the essential Sec protein translocation apparatus which comprises SecA, SecYEG and auxiliary proteins SecDF-YajC and YidC.

Its subcellular location is the cell inner membrane. In terms of biological role, part of the Sec protein translocase complex. Interacts with the SecYEG preprotein conducting channel. SecDF uses the proton motive force (PMF) to complete protein translocation after the ATP-dependent function of SecA. The sequence is that of Protein translocase subunit SecF from Magnetococcus marinus (strain ATCC BAA-1437 / JCM 17883 / MC-1).